Consider the following 56-residue polypeptide: Large ribosomal subunit protein bL32 (56 aa).

Positions 1 to 27 (MAVQQNKKSRSRRDMRRSHDALTTAAV) are disordered. The span at 7–16 (KKSRSRRDMR) shows a compositional bias: basic residues.

This sequence belongs to the bacterial ribosomal protein bL32 family.

The polypeptide is Large ribosomal subunit protein bL32 (Actinobacillus pleuropneumoniae serotype 7 (strain AP76)).